Here is a 660-residue protein sequence, read N- to C-terminus: Bifunctional polymyxin resistance protein ArnA (660 aa).

Residues 1-304 are formyltransferase ArnAFT; it reads MKAIVFAYHD…EMGIVTDVRV (304 aa). His104 acts as the Proton donor; for formyltransferase activity in catalysis. Residues Arg114 and 136-140 each bind (6R)-10-formyltetrahydrofolate; that span reads TAKAD. The dehydrogenase ArnADH stretch occupies residues 314–660; that stretch reads RRQRVLILGV…RGAVEELGNK (347 aa). NAD(+) contacts are provided by residues Asp347 and 368–369; that span reads DV. UDP-alpha-D-glucuronate contacts are provided by residues Ala393, Tyr398, and 432–433; that span reads TS. Glu434 acts as the Proton acceptor; for decarboxylase activity in catalysis. Residues Arg460, Asn492, 526–535, and Tyr613 contribute to the UDP-alpha-D-glucuronate site; that span reads KLVDGGEQKR. The Proton donor; for decarboxylase activity role is filled by Arg619.

The protein in the N-terminal section; belongs to the Fmt family. UDP-L-Ara4N formyltransferase subfamily. In the C-terminal section; belongs to the NAD(P)-dependent epimerase/dehydratase family. UDP-glucuronic acid decarboxylase subfamily. As to quaternary structure, homohexamer, formed by a dimer of trimers.

The catalysed reaction is UDP-alpha-D-glucuronate + NAD(+) = UDP-beta-L-threo-pentopyranos-4-ulose + CO2 + NADH. It carries out the reaction UDP-4-amino-4-deoxy-beta-L-arabinose + (6R)-10-formyltetrahydrofolate = UDP-4-deoxy-4-formamido-beta-L-arabinose + (6S)-5,6,7,8-tetrahydrofolate + H(+). It functions in the pathway nucleotide-sugar biosynthesis; UDP-4-deoxy-4-formamido-beta-L-arabinose biosynthesis; UDP-4-deoxy-4-formamido-beta-L-arabinose from UDP-alpha-D-glucuronate: step 1/3. Its pathway is nucleotide-sugar biosynthesis; UDP-4-deoxy-4-formamido-beta-L-arabinose biosynthesis; UDP-4-deoxy-4-formamido-beta-L-arabinose from UDP-alpha-D-glucuronate: step 3/3. The protein operates within bacterial outer membrane biogenesis; lipopolysaccharide biosynthesis. Functionally, bifunctional enzyme that catalyzes the oxidative decarboxylation of UDP-glucuronic acid (UDP-GlcUA) to UDP-4-keto-arabinose (UDP-Ara4O) and the addition of a formyl group to UDP-4-amino-4-deoxy-L-arabinose (UDP-L-Ara4N) to form UDP-L-4-formamido-arabinose (UDP-L-Ara4FN). The modified arabinose is attached to lipid A and is required for resistance to polymyxin and cationic antimicrobial peptides. The polypeptide is Bifunctional polymyxin resistance protein ArnA (Proteus mirabilis (strain HI4320)).